Consider the following 308-residue polypeptide: Putative S-adenosyl-L-methionine-dependent methyltransferase MAB_4585c (308 aa).

S-adenosyl-L-methionine-binding positions include D131 and 160 to 161 (DL).

Belongs to the UPF0677 family.

Functionally, exhibits S-adenosyl-L-methionine-dependent methyltransferase activity. The polypeptide is Putative S-adenosyl-L-methionine-dependent methyltransferase MAB_4585c (Mycobacteroides abscessus (strain ATCC 19977 / DSM 44196 / CCUG 20993 / CIP 104536 / JCM 13569 / NCTC 13031 / TMC 1543 / L948) (Mycobacterium abscessus)).